We begin with the raw amino-acid sequence, 329 residues long: G-protein coupled bile acid receptor 1 (329 aa).

Residues 1 to 15 (MMTPNSTELSAIPMG) lie on the Extracellular side of the membrane. N5 carries N-linked (GlcNAc...) asparagine glycosylation. Residues 16–36 (VLGLSLALASLIVIANLLLAL) traverse the membrane as a helical segment. Residues 37–49 (GIALDRHLRSPPA) lie on the Cytoplasmic side of the membrane. The helical transmembrane segment at 50 to 70 (GCFFLSLLLAGLLTGLALPML) threads the bilayer. Topologically, residues 71–84 (PGLWSRNHQGYWSC) are extracellular. C84 and C154 are oxidised to a cystine. Residues 85-105 (LLLHLTPNFCFLSLLANLLLV) form a helical membrane-spanning segment. Residues 106–124 (HGERYMAVLQPLRPHGSVR) lie on the Cytoplasmic side of the membrane. Residues 125 to 145 (LALFLTWVSSLFFASLPALGW) traverse the membrane as a helical segment. The Extracellular portion of the chain corresponds to 146 to 164 (NHWSPDANCSSQAVFPAPY). A glycan (N-linked (GlcNAc...) asparagine) is linked at N153. Residues 165–185 (LYLEVYGLLLPAVGATALLSV) traverse the membrane as a helical segment. Residues 186–229 (RVLATAHRQLCEIRRLERAVCRDVPSTLARALTWRQARAQAGAT) lie on the Cytoplasmic side of the membrane. Residues 230–250 (LLFLLCWGPYVATLLLSVLAY) traverse the membrane as a helical segment. Residues 251 to 260 (ERRPPLGPGT) lie on the Extracellular side of the membrane. A helical membrane pass occupies residues 261–281 (LLSLISLGSTSAAAVPVAMGL). At 282-329 (GDQRYTAPWRTAAQRCLRVLRGRAKRDNPGPSTAYHTSSQCSIDLDLN) the chain is on the cytoplasmic side.

It belongs to the G-protein coupled receptor 1 family.

It is found in the cell membrane. Its function is as follows. Receptor for bile acid. Bile acid-binding induces its internalization, activation of extracellular signal-regulated kinase and intracellular cAMP production. May be involved in the suppression of macrophage functions by bile acids. Involved in bile acid promoted GLP1R secretion. This is G-protein coupled bile acid receptor 1 (Gpbar1) from Mus musculus (Mouse).